The sequence spans 586 residues: Arginine--tRNA ligase (586 aa).

The 'HIGH' region motif lies at 128–138 (ANPTGPLHVGH).

This sequence belongs to the class-I aminoacyl-tRNA synthetase family. In terms of assembly, monomer.

Its subcellular location is the cytoplasm. The catalysed reaction is tRNA(Arg) + L-arginine + ATP = L-arginyl-tRNA(Arg) + AMP + diphosphate. The chain is Arginine--tRNA ligase from Legionella pneumophila (strain Corby).